Here is a 483-residue protein sequence, read N- to C-terminus: UDP-N-acetylmuramoyl-L-alanyl-D-glutamate--L-lysine ligase (483 aa).

Serine 44 is a binding site for UDP-N-acetyl-alpha-D-muramoyl-L-alanyl-D-glutamate. 120–126 (GTKGKTT) is a binding site for ATP. Residues 162–163 (TT), serine 189, and arginine 197 contribute to the UDP-N-acetyl-alpha-D-muramoyl-L-alanyl-D-glutamate site. Lysine 231 carries the N6-carboxylysine modification. The L-lysine recognition motif signature appears at 406-409 (DDPN).

This sequence belongs to the MurCDEF family. MurE subfamily. In terms of processing, carboxylation is probably crucial for Mg(2+) binding and, consequently, for the gamma-phosphate positioning of ATP.

The protein resides in the cytoplasm. The enzyme catalyses UDP-N-acetyl-alpha-D-muramoyl-L-alanyl-D-glutamate + L-lysine + ATP = UDP-N-acetyl-alpha-D-muramoyl-L-alanyl-gamma-D-glutamyl-L-lysine + ADP + phosphate + H(+). It functions in the pathway cell wall biogenesis; peptidoglycan biosynthesis. Its function is as follows. Catalyzes the addition of L-lysine to the nucleotide precursor UDP-N-acetylmuramoyl-L-alanyl-D-glutamate (UMAG) in the biosynthesis of bacterial cell-wall peptidoglycan. In Streptococcus mutans serotype c (strain ATCC 700610 / UA159), this protein is UDP-N-acetylmuramoyl-L-alanyl-D-glutamate--L-lysine ligase.